Here is a 220-residue protein sequence, read N- to C-terminus: Artemin (220 aa).

The signal sequence occupies residues 1–39; that stretch reads MELGLGGLSTLSHCPWPRQQPALWPTLAALALLSSVAEA. Residues 40–107 constitute a propeptide that is removed on maturation; that stretch reads SLGSAPRSPA…ALPRGGRAAR (68 aa). Residues 41–121 are disordered; the sequence is LGSAPRSPAP…GSRARAAGAR (81 aa). Composition is skewed to pro residues over residues 47–58 and 81–98; these read SPAPREGPPPVL and PPPQ…PPSA. Over residues 99-121 the composition is skewed to low complexity; it reads LPRGGRAARAGGPGSRARAAGAR. 3 disulfide bridges follow: cysteine 123-cysteine 188, cysteine 150-cysteine 216, and cysteine 154-cysteine 218. N-linked (GlcNAc...) asparagine glycosylation is present at asparagine 202.

This sequence belongs to the TGF-beta family. GDNF subfamily. As to quaternary structure, homodimer; disulfide-linked. Interacts with GFRA3 coreceptor and RET: forms a 2:2:2 ternary complex composed of ARTN ligand, GFRA3 and RET receptor. As to expression, ubiquitous. Expressed at high levels in peripheral tissues including prostate, placenta, pancreas, heart, kidney, pituitary gland, lung and testis. Expressed at low levels in the brain.

Its subcellular location is the secreted. Its function is as follows. Growth factor that supports the survival of sensory and sympathetic peripheral neurons in culture and also supports the survival of dopaminergic neurons of the ventral mid-brain. Acts by binding to its coreceptor, GFRA3, leading to autophosphorylation and activation of the RET receptor. Strong attractant of gut hematopoietic cells thus promoting the formation Peyer's patch-like structures, a major component of the gut-associated lymphoid tissue. In Homo sapiens (Human), this protein is Artemin.